We begin with the raw amino-acid sequence, 81 residues long: Large ribosomal subunit protein bL28 (81 aa).

It belongs to the bacterial ribosomal protein bL28 family.

The sequence is that of Large ribosomal subunit protein bL28 from Gloeobacter violaceus (strain ATCC 29082 / PCC 7421).